A 191-amino-acid chain; its full sequence is NF-kappa-B inhibitor-interacting Ras-like protein 2 (191 aa).

A small GTPase-like region spans residues 1–191 (MGKSCKVVVC…KNKGSGSLDG (191 aa)). 11–18 (GQASVGKT) contributes to the GTP binding site. The Effector region motif lies at 35 to 43 (MIETQEDIY). GTP-binding positions include 61–65 (DTRGL) and 120–123 (NKCD). Residues 169 to 191 (TQPQSKSAFPLSRKNKGSGSLDG) are disordered.

This sequence belongs to the small GTPase superfamily. Ras family. KappaB-Ras subfamily. As to quaternary structure, interacts with both NF-kappa-B inhibitor alpha (NFKBIA) and beta (NFKBIB) in vitro. However, it probably only interacts with NFKBIB in vivo. Interacts with GFOD1.

It localises to the cytoplasm. Its function is as follows. Atypical Ras-like protein that acts as a potent regulator of NF-kappa-B activity by preventing the degradation of NF-kappa-B inhibitor beta (NFKBIB) by most signals, explaining why NFKBIB is more resistant to degradation. May act by blocking phosphorylation of NFKBIB and nuclear localization of p65/RELA NF-kappa-B subunit. It is unclear whether it acts as a GTPase. Both GTP- and GDP-bound forms block phosphorylation of NFKBIB. The sequence is that of NF-kappa-B inhibitor-interacting Ras-like protein 2 (Nkiras2) from Mus musculus (Mouse).